The following is a 503-amino-acid chain: Inosine-5'-monophosphate dehydrogenase 1 (503 aa).

Serine 2 is modified (N-acetylserine). In terms of domain architecture, CBS spans 167–225 (MKSCDSSDYCVPWEIDFEKLEFVLEDKQKGFVVLERDGETVNVVTKDDIQRVKGYPKSG). NAD(+)-binding positions include 265 to 267 (DSS) and 315 to 317 (GMG). The K(+) site is built by glycine 317 and glycine 319. Serine 320 is a binding site for IMP. Position 322 (cysteine 322) interacts with K(+). Cysteine 322 acts as the Thioimidate intermediate in catalysis. IMP is bound by residues 355–357 (DGG), 378–379 (GS), and 402–406 (YRGMG). The Proton acceptor role is filled by arginine 418. Glutamine 430 provides a ligand contact to IMP. 3 residues coordinate K(+): glutamate 489, glycine 490, and glycine 491.

The protein belongs to the IMPDH/GMPR family. Homotetramer. K(+) is required as a cofactor.

Its subcellular location is the cytoplasm. The catalysed reaction is IMP + NAD(+) + H2O = XMP + NADH + H(+). It functions in the pathway purine metabolism; XMP biosynthesis via de novo pathway; XMP from IMP: step 1/1. Mycophenolic acid (MPA) is a non-competitive inhibitor that prevents formation of the closed enzyme conformation by binding to the same site as the amobile flap. In contrast, mizoribine monophosphate (MZP) is a competitive inhibitor that induces the closed conformation. MPA is a potent inhibitor of mammalian IMPDHs but a poor inhibitor of the bacterial enzymes. MZP is a more potent inhibitor of bacterial IMPDH. Functionally, catalyzes the conversion of inosine 5'-phosphate (IMP) to xanthosine 5'-phosphate (XMP), the first committed and rate-limiting step in the de novo synthesis of guanine nucleotides, and therefore plays an important role in the regulation of cell growth. This is Inosine-5'-monophosphate dehydrogenase 1 from Arabidopsis thaliana (Mouse-ear cress).